A 114-amino-acid polypeptide reads, in one-letter code: uncharacterized protein (114 aa).

The next 2 helical transmembrane spans lie at 9-29 (LAIFLFFVAVGFIIFIGSFWL) and 75-95 (LVHFFIPVGFGLLFGIAVAII).

It is found in the cell membrane. This is an uncharacterized protein from Mycoplasma pneumoniae (strain ATCC 29342 / M129 / Subtype 1) (Mycoplasmoides pneumoniae).